Consider the following 254-residue polypeptide: ATP synthase subunit a (254 aa).

The propeptide at 1 to 6 is removed in mature form; the sequence is MAFLIH. Transmembrane regions (helical) follow at residues 32 to 52, 83 to 103, 119 to 139, 146 to 166, 182 to 202, 207 to 227, and 228 to 248; these read LTNL…LHIM, IGAA…FILI, SIMV…ILGL, FFSF…LVPI, LFAN…FLAP, TFII…IIGL, and EIAV…SYLK.

Belongs to the ATPase A chain family. In terms of assembly, F-type ATPases have 2 components, CF(1) - the catalytic core - and CF(0) - the membrane proton channel. CF(1) has five subunits: alpha(3), beta(3), gamma(1), delta(1), epsilon(1). CF(0) has three main subunits: a, b and c.

The protein resides in the mitochondrion inner membrane. Its function is as follows. Mitochondrial membrane ATP synthase (F(1)F(0) ATP synthase or Complex V) produces ATP from ADP in the presence of a proton gradient across the membrane which is generated by electron transport complexes of the respiratory chain. F-type ATPases consist of two structural domains, F(1) - containing the extramembraneous catalytic core and F(0) - containing the membrane proton channel, linked together by a central stalk and a peripheral stalk. During catalysis, ATP synthesis in the catalytic domain of F(1) is coupled via a rotary mechanism of the central stalk subunits to proton translocation. Key component of the proton channel; it may play a direct role in the translocation of protons across the membrane. This chain is ATP synthase subunit a (ATP6), found in Mycosarcoma maydis (Corn smut fungus).